Reading from the N-terminus, the 652-residue chain is Capsid protein (652 aa).

Residues M1–N11 show a composition bias toward polar residues. A disordered region spans residues M1 to G70. The span at T34 to G47 shows a compositional bias: low complexity.

Its subcellular location is the virion. Its function is as follows. The capsid protein self-assembles to form an icosahedral capsid with a T=2 symmetry made of 120 subunits. In Atkinsonella hypoxylon virus (isolate 2H) (AhV), this protein is Capsid protein.